A 352-amino-acid chain; its full sequence is uncharacterized protein (352 aa).

This is an uncharacterized protein from Thermoproteus tenax (TTV1).